We begin with the raw amino-acid sequence, 169 residues long: Transcription antitermination protein NusB (169 aa).

A disordered region spans residues 150 to 169 (AAATSRRTETAGGESNDAGS).

It belongs to the NusB family.

In terms of biological role, involved in transcription antitermination. Required for transcription of ribosomal RNA (rRNA) genes. Binds specifically to the boxA antiterminator sequence of the ribosomal RNA (rrn) operons. The polypeptide is Transcription antitermination protein NusB (Rhodococcus jostii (strain RHA1)).